A 391-amino-acid chain; its full sequence is UPF0229 protein CLL_A3091 (391 aa).

Disordered regions lie at residues methionine 1–arginine 23 and valine 75–glutamate 107. Basic and acidic residues predominate over residues glycine 80–serine 92.

Belongs to the UPF0229 family.

This chain is UPF0229 protein CLL_A3091, found in Clostridium botulinum (strain Eklund 17B / Type B).